Reading from the N-terminus, the 269-residue chain is Hydroxyethylthiazole kinase (269 aa).

M45 is a substrate binding site. Residues R121 and T167 each contribute to the ATP site. Position 194 (G194) interacts with substrate.

It belongs to the Thz kinase family. Requires Mg(2+) as cofactor.

It catalyses the reaction 5-(2-hydroxyethyl)-4-methylthiazole + ATP = 4-methyl-5-(2-phosphooxyethyl)-thiazole + ADP + H(+). It participates in cofactor biosynthesis; thiamine diphosphate biosynthesis; 4-methyl-5-(2-phosphoethyl)-thiazole from 5-(2-hydroxyethyl)-4-methylthiazole: step 1/1. Catalyzes the phosphorylation of the hydroxyl group of 4-methyl-5-beta-hydroxyethylthiazole (THZ). The polypeptide is Hydroxyethylthiazole kinase (Bacillus mycoides (strain KBAB4) (Bacillus weihenstephanensis)).